The sequence spans 36 residues: MSASYLPSILVPLVGLVFPAVTMASLFLYIEQDEIV.

The helical transmembrane segment at 9-29 threads the bilayer; that stretch reads ILVPLVGLVFPAVTMASLFLY.

This sequence belongs to the PsaI family.

It localises to the plastid. It is found in the chloroplast thylakoid membrane. Functionally, may help in the organization of the PsaL subunit. In Staurastrum punctulatum (Green alga), this protein is Photosystem I reaction center subunit VIII.